Here is a 321-residue protein sequence, read N- to C-terminus: Phosphatidate cytidylyltransferase, mitochondrial (321 aa).

It belongs to the TAM41 family. Requires Mg(2+) as cofactor. It depends on Co(2+) as a cofactor. Cu(2+) serves as cofactor.

Its subcellular location is the mitochondrion inner membrane. It catalyses the reaction a 1,2-diacyl-sn-glycero-3-phosphate + CTP + H(+) = a CDP-1,2-diacyl-sn-glycerol + diphosphate. The protein operates within phospholipid metabolism; CDP-diacylglycerol biosynthesis; CDP-diacylglycerol from sn-glycerol 3-phosphate: step 3/3. Catalyzes the formation of CDP-diacylglycerol (CDP-DAG) from phosphatidic acid (PA) in the mitochondrial inner membrane. Required for the biosynthesis of the dimeric phospholipid cardiolipin, which stabilizes supercomplexes of the mitochondrial respiratory chain in the mitochondrial inner membrane. The sequence is that of Phosphatidate cytidylyltransferase, mitochondrial from Caenorhabditis elegans.